The following is a 189-amino-acid chain: Elongation factor P (189 aa).

It belongs to the elongation factor P family.

The protein localises to the cytoplasm. It functions in the pathway protein biosynthesis; polypeptide chain elongation. Involved in peptide bond synthesis. Stimulates efficient translation and peptide-bond synthesis on native or reconstituted 70S ribosomes in vitro. Probably functions indirectly by altering the affinity of the ribosome for aminoacyl-tRNA, thus increasing their reactivity as acceptors for peptidyl transferase. This is Elongation factor P from Pseudomonas savastanoi pv. phaseolicola (strain 1448A / Race 6) (Pseudomonas syringae pv. phaseolicola (strain 1448A / Race 6)).